Here is a 736-residue protein sequence, read N- to C-terminus: Polyribonucleotide nucleotidyltransferase (736 aa).

2 residues coordinate Mg(2+): D506 and D512. In terms of domain architecture, KH spans 573 to 632 (PRLTTIQVPVDAIGLIIGKGGETIRSITEETGAEINIEDDGTVTIACSSVEGTHAALATI). The S1 motif domain occupies 642 to 717 (GTIYLGKVRD…GKTRFALSMR (76 aa)).

The protein belongs to the polyribonucleotide nucleotidyltransferase family. Mg(2+) serves as cofactor.

Its subcellular location is the cytoplasm. It catalyses the reaction RNA(n+1) + phosphate = RNA(n) + a ribonucleoside 5'-diphosphate. Involved in mRNA degradation. Catalyzes the phosphorolysis of single-stranded polyribonucleotides processively in the 3'- to 5'-direction. This is Polyribonucleotide nucleotidyltransferase from Chlorobium limicola (strain DSM 245 / NBRC 103803 / 6330).